We begin with the raw amino-acid sequence, 861 residues long: Glucans biosynthesis glucosyltransferase H (861 aa).

Helical transmembrane passes span 142 to 162 (FILLLLMLAQTSVATYYMKGI), 188 to 208 (VLPYVIQFGILALFAILFCWV), 516 to 536 (VFLTGVMSYLSAPLWFFFLVL), 573 to 593 (LFSTTLTLLFLPKLLSVMLIW), 600 to 620 (FGGVIRVTLSMLLEMFFSVLL), and 683 to 703 (FLWWLSPIVGSLILSIPVSVI).

Belongs to the glycosyltransferase 2 family. OpgH subfamily.

The protein resides in the cell inner membrane. The protein operates within glycan metabolism; osmoregulated periplasmic glucan (OPG) biosynthesis. Its function is as follows. Involved in the biosynthesis of osmoregulated periplasmic glucans (OPGs). The chain is Glucans biosynthesis glucosyltransferase H from Pseudomonas aeruginosa (strain LESB58).